The chain runs to 118 residues: Large ribosomal subunit protein bL20 (118 aa).

The protein belongs to the bacterial ribosomal protein bL20 family.

Binds directly to 23S ribosomal RNA and is necessary for the in vitro assembly process of the 50S ribosomal subunit. It is not involved in the protein synthesizing functions of that subunit. The protein is Large ribosomal subunit protein bL20 of Lactobacillus acidophilus (strain ATCC 700396 / NCK56 / N2 / NCFM).